Here is a 466-residue protein sequence, read N- to C-terminus: UDP-N-acetylmuramoylalanine--D-glutamate ligase (466 aa).

124–130 is a binding site for ATP; that stretch reads GSDGKTT.

It belongs to the MurCDEF family.

Its subcellular location is the cytoplasm. The catalysed reaction is UDP-N-acetyl-alpha-D-muramoyl-L-alanine + D-glutamate + ATP = UDP-N-acetyl-alpha-D-muramoyl-L-alanyl-D-glutamate + ADP + phosphate + H(+). It participates in cell wall biogenesis; peptidoglycan biosynthesis. In terms of biological role, cell wall formation. Catalyzes the addition of glutamate to the nucleotide precursor UDP-N-acetylmuramoyl-L-alanine (UMA). The polypeptide is UDP-N-acetylmuramoylalanine--D-glutamate ligase (Acetivibrio thermocellus (strain ATCC 27405 / DSM 1237 / JCM 9322 / NBRC 103400 / NCIMB 10682 / NRRL B-4536 / VPI 7372) (Clostridium thermocellum)).